The chain runs to 346 residues: [LysW]-lysine/[LysW]-ornithine hydrolase (346 aa).

His67 is a Zn(2+) binding site. Asp69 is an active-site residue. Zn(2+) is bound at residue Asp91. The active-site Proton acceptor is Glu121. Zn(2+) is bound by residues Glu122, Glu145, and His316.

The protein belongs to the peptidase M20A family. LysK subfamily. It depends on Zn(2+) as a cofactor. The cofactor is Co(2+).

It localises to the cytoplasm. It carries out the reaction [amino-group carrier protein]-C-terminal-gamma-(L-lysyl)-L-glutamate + H2O = [amino-group carrier protein]-C-terminal-L-glutamate + L-lysine. The enzyme catalyses [amino-group carrier protein]-C-terminal-gamma-(L-ornithyl)-L-glutamate + H2O = [amino-group carrier protein]-C-terminal-L-glutamate + L-ornithine. It participates in amino-acid biosynthesis; L-lysine biosynthesis via AAA pathway; L-lysine from L-alpha-aminoadipate (Thermus route): step 5/5. Its pathway is amino-acid biosynthesis; L-arginine biosynthesis. Its function is as follows. Catalyzes the release of L-lysine from [LysW]-gamma-L-lysine and the release of L-ornithine from [LysW]-L-ornithine. The polypeptide is [LysW]-lysine/[LysW]-ornithine hydrolase (Sulfurisphaera tokodaii (strain DSM 16993 / JCM 10545 / NBRC 100140 / 7) (Sulfolobus tokodaii)).